Consider the following 148-residue polypeptide: Cytochrome c-type biogenesis protein CcmE (148 aa).

The Cytoplasmic segment spans residues 1–7 (MKPRHKK). The helical; Signal-anchor for type II membrane protein transmembrane segment at 8–28 (LAIIASSVTALGVASVLVLNA) threads the bilayer. Topologically, residues 29–148 (FQSNLVFFFS…ADKARKTVMQ (120 aa)) are periplasmic. Residues His-123 and Tyr-127 each contribute to the heme site.

The protein belongs to the CcmE/CycJ family.

It is found in the cell inner membrane. Heme chaperone required for the biogenesis of c-type cytochromes. Transiently binds heme delivered by CcmC and transfers the heme to apo-cytochromes in a process facilitated by CcmF and CcmH. This chain is Cytochrome c-type biogenesis protein CcmE, found in Nitrosospira multiformis (strain ATCC 25196 / NCIMB 11849 / C 71).